Here is a 301-residue protein sequence, read N- to C-terminus: Ribonuclease HIII (301 aa).

An RNase H type-2 domain is found at 88–301; the sequence is RPRIGVDESG…TFYEVLGSTS (214 aa). 3 residues coordinate a divalent metal cation: D94, E95, and D198.

It belongs to the RNase HII family. RnhC subfamily. The cofactor is Mn(2+). Mg(2+) serves as cofactor.

It localises to the cytoplasm. The enzyme catalyses Endonucleolytic cleavage to 5'-phosphomonoester.. Functionally, endonuclease that specifically degrades the RNA of RNA-DNA hybrids. In Chlamydia muridarum (strain MoPn / Nigg), this protein is Ribonuclease HIII (rnhC).